Reading from the N-terminus, the 198-residue chain is Probable chemoreceptor glutamine deamidase CheD (198 aa).

Belongs to the CheD family.

It catalyses the reaction L-glutaminyl-[protein] + H2O = L-glutamyl-[protein] + NH4(+). Probably deamidates glutamine residues to glutamate on methyl-accepting chemotaxis receptors (MCPs), playing an important role in chemotaxis. The protein is Probable chemoreceptor glutamine deamidase CheD of Xanthomonas axonopodis pv. citri (strain 306).